Reading from the N-terminus, the 213-residue chain is Orotate phosphoribosyltransferase (213 aa).

Lys-26 contributes to the 5-phospho-alpha-D-ribose 1-diphosphate binding site. 34–35 (FF) provides a ligand contact to orotate. 5-phospho-alpha-D-ribose 1-diphosphate-binding positions include 72 to 73 (YK), Arg-98, Lys-99, Lys-102, and 123 to 131 (DDVISAGTS). Ser-127 and Arg-155 together coordinate orotate.

This sequence belongs to the purine/pyrimidine phosphoribosyltransferase family. PyrE subfamily. Homodimer. The cofactor is Mg(2+).

It carries out the reaction orotidine 5'-phosphate + diphosphate = orotate + 5-phospho-alpha-D-ribose 1-diphosphate. It participates in pyrimidine metabolism; UMP biosynthesis via de novo pathway; UMP from orotate: step 1/2. In terms of biological role, catalyzes the transfer of a ribosyl phosphate group from 5-phosphoribose 1-diphosphate to orotate, leading to the formation of orotidine monophosphate (OMP). This is Orotate phosphoribosyltransferase from Neisseria gonorrhoeae (strain NCCP11945).